Consider the following 303-residue polypeptide: Monoglyceride lipase (303 aa).

At T10 the chain carries Phosphothreonine. Y58 carries the 3'-nitrotyrosine modification. S122 (nucleophile) is an active-site residue. S189 carries the post-translational modification Phosphoserine. Catalysis depends on charge relay system residues D239 and H269.

The protein belongs to the AB hydrolase superfamily. Monoacylglycerol lipase family. Homodimer. Ubiquitous. Highly expressed in adipose tissue, adrenal gland, ovary, heart, spleen, lung, skeletal muscle, kidney and testis. Highly expressed throughout the brain.

The protein localises to the cytoplasm. The protein resides in the cytosol. It is found in the membrane. The catalysed reaction is Hydrolyzes glycerol monoesters of long-chain fatty acids.. The enzyme catalyses a 1-acylglycerol + H2O = glycerol + a fatty acid + H(+). It carries out the reaction a 2-acylglycerol + H2O = glycerol + a fatty acid + H(+). It catalyses the reaction 1-octanoylglycerol + H2O = octanoate + glycerol + H(+). The catalysed reaction is 2-(5Z,8Z,11Z,14Z-eicosatetraenoyl)-glycerol + H2O = glycerol + (5Z,8Z,11Z,14Z)-eicosatetraenoate + H(+). The enzyme catalyses 1-decanoylglycerol + H2O = decanoate + glycerol + H(+). It carries out the reaction 1-dodecanoylglycerol + H2O = dodecanoate + glycerol + H(+). It catalyses the reaction 1-tetradecanoylglycerol + H2O = tetradecanoate + glycerol + H(+). The catalysed reaction is 2-hexadecanoylglycerol + H2O = glycerol + hexadecanoate + H(+). The enzyme catalyses 1-(9Z-octadecenoyl)-glycerol + H2O = glycerol + (9Z)-octadecenoate + H(+). It carries out the reaction 2-(9Z-octadecenoyl)-glycerol + H2O = glycerol + (9Z)-octadecenoate + H(+). It catalyses the reaction 2-(9Z,12Z-octadecadienoyl)-glycerol + H2O = (9Z,12Z)-octadecadienoate + glycerol + H(+). The catalysed reaction is 1-(5Z,8Z,11Z,14Z-eicosatetraenoyl)-glycerol + H2O = glycerol + (5Z,8Z,11Z,14Z)-eicosatetraenoate + H(+). The enzyme catalyses 1-(9Z,12Z-octadecadienoyl)-glycerol + H2O = (9Z,12Z)-octadecadienoate + glycerol + H(+). It carries out the reaction 1-hexadecanoylglycerol + H2O = glycerol + hexadecanoate + H(+). It catalyses the reaction 1-octadecanoylglycerol + H2O = octadecanoate + glycerol + H(+). The catalysed reaction is prostaglandin E2 1-glyceryl ester + H2O = prostaglandin E2 + glycerol + H(+). The enzyme catalyses prostaglandin D2-1-glycerol ester + H2O = prostaglandin D2 + glycerol + H(+). It carries out the reaction 2-glyceryl-15-deoxy-Delta(12,14)-prostaglandin J2 + H2O = 15-deoxy-Delta(12,14)-prostaglandin J2 + glycerol + H(+). It catalyses the reaction prostaglandin F2alpha 1-glyceryl ester + H2O = prostaglandin F2alpha + glycerol + H(+). It functions in the pathway glycerolipid metabolism; triacylglycerol degradation. In terms of biological role, converts monoacylglycerides to free fatty acids and glycerol. Hydrolyzes the endocannabinoid 2-arachidonoylglycerol, and thereby contributes to the regulation of endocannabinoid signaling, nociperception and perception of pain. Regulates the levels of fatty acids that serve as signaling molecules and promote cancer cell migration, invasion and tumor growth. The polypeptide is Monoglyceride lipase (Rattus norvegicus (Rat)).